The following is a 505-amino-acid chain: Ikaros family zinc finger protein (505 aa).

4 consecutive C2H2-type zinc fingers follow at residues Leu-18 to His-40, Phe-46 to His-68, Phe-74 to His-96, and Tyr-102 to His-128. Composition is skewed to polar residues over residues Phe-262–Ala-273 and Arg-309–Pro-327. Disordered stretches follow at residues Phe-262 to Ser-296 and Arg-309 to Ser-440. Residues Ile-336 to Cys-345 show a composition bias toward gly residues. A compositionally biased stretch (polar residues) spans Ala-366–Ser-377. Low complexity predominate over residues Gly-393 to Gly-406. Positions His-409–Arg-419 are enriched in basic and acidic residues. The segment covering Ser-424–Gly-439 has biased composition (polar residues). 2 consecutive C2H2-type zinc fingers follow at residues Tyr-448 to His-470 and Phe-476 to His-500.

It belongs to the Ikaros C2H2-type zinc-finger protein family. As to quaternary structure, heterodimer and homodimer with other IKAROS family members. As to expression, expression is strongest in the blood, gills and intestine.

It localises to the nucleus. This is Ikaros family zinc finger protein from Myxine glutinosa (Atlantic hagfish).